Reading from the N-terminus, the 105-residue chain is N(4)-acetylcytidine amidohydrolase (105 aa).

An ASCH domain is found at 8-93 (TFFEFLTPLV…ALIQEIYPNI (86 aa)). Lysine 22 serves as the catalytic Proton acceptor. Threonine 25 (nucleophile) is an active-site residue. The Proton donor role is filled by glutamate 75.

The protein belongs to the N(4)-acetylcytidine amidohydrolase family.

The enzyme catalyses N(4)-acetylcytidine + H2O = cytidine + acetate + H(+). The catalysed reaction is N(4)-acetyl-2'-deoxycytidine + H2O = 2'-deoxycytidine + acetate + H(+). It carries out the reaction N(4)-acetylcytosine + H2O = cytosine + acetate + H(+). Catalyzes the hydrolysis of N(4)-acetylcytidine (ac4C). The protein is N(4)-acetylcytidine amidohydrolase of Vibrio cholerae serotype O1 (strain ATCC 39315 / El Tor Inaba N16961).